A 364-amino-acid polypeptide reads, in one-letter code: MLWILGPHTGPLLFDAVASLDTSPLAAARYHGDQDVAPGVLDFAVNVRHDRPPEWLVRQLAALLPELARYPSTDDVHRAQDAVAERHGRTRDEVLPLVGAAEGFALLHNLSPVRAAIVVPAFTEPAIALSAAGITAHHVVLKPPFVLDTAHVPDDADLVVVGNPTNPTSVLHLREQLLELRRPGRILVVDEAFADWVPGEPQSLADDSLPDVLVLRSLTKTWSLAGLRVGYALGSPDVLARLTVQRAHWPLGTLQLTAIAACCAPRAVAAAAADAVRLTALRAEMVAGLRSVGAEVVDGAAPFVLFNIADADGLRNYLQSKGIAVRRGDTFVGLDARYLRAAVRPEWPVLVAAIAEWAKRGGRR.

N6-(pyridoxal phosphate)lysine is present on Lys220.

This sequence belongs to the class-I pyridoxal-phosphate-dependent aminotransferase family. Monomer. It depends on pyridoxal 5'-phosphate as a cofactor.

It is found in the secreted. The protein resides in the cell wall. The enzyme catalyses L-histidinol phosphate + 2-oxoglutarate = 3-(imidazol-4-yl)-2-oxopropyl phosphate + L-glutamate. In terms of biological role, aminotransferase that catalyzes the conversion of histidinol phosphate and 2-oxoglutarate into L-glutamate and imidazole acetol phosphate. Might play a significant role in mediating histidine biosynthesis during infection. Facilitates mycobacterial survival and virulence in macrophages. The chain is Histidinol-phosphate aminotransferase BQ2027_MB2256C from Mycobacterium bovis (strain ATCC BAA-935 / AF2122/97).